The sequence spans 179 residues: Cellular nucleic acid-binding protein homolog (179 aa).

7 CCHC-type zinc fingers span residues 17–34 (PRCY…ECTK), 36–53 (SICY…ECTE), 58–75 (KTCY…DCPS), 83–100 (AECY…DCRT), 116–133 (MNCY…DCTM), 135–152 (VKCY…ECQQ), and 157–174 (QLCY…NCTS).

The protein to human CNBP and to retroviral nucleic acid binding proteins (NBP). Post-translationally, phosphorylated.

The protein resides in the nucleus. Acts in the sexual differentiation pathway. Is required for efficient conjugation. Double-stranded DNA-binding protein. This Schizosaccharomyces pombe (strain 972 / ATCC 24843) (Fission yeast) protein is Cellular nucleic acid-binding protein homolog (byr3).